Consider the following 138-residue polypeptide: Phosphoribosyl-AMP cyclohydrolase (138 aa).

Positions 1–23 (MSEQSAPSPTPAAELSSDPASPL) are disordered. Aspartate 100 contacts Mg(2+). Cysteine 101 lines the Zn(2+) pocket. Mg(2+) is bound by residues aspartate 102 and aspartate 104. Cysteine 117 and cysteine 124 together coordinate Zn(2+).

The protein belongs to the PRA-CH family. Homodimer. The cofactor is Mg(2+). It depends on Zn(2+) as a cofactor.

It localises to the cytoplasm. The enzyme catalyses 1-(5-phospho-beta-D-ribosyl)-5'-AMP + H2O = 1-(5-phospho-beta-D-ribosyl)-5-[(5-phospho-beta-D-ribosylamino)methylideneamino]imidazole-4-carboxamide. The protein operates within amino-acid biosynthesis; L-histidine biosynthesis; L-histidine from 5-phospho-alpha-D-ribose 1-diphosphate: step 3/9. Its function is as follows. Catalyzes the hydrolysis of the adenine ring of phosphoribosyl-AMP. This is Phosphoribosyl-AMP cyclohydrolase from Paenarthrobacter aurescens (strain TC1).